The chain runs to 177 residues: Large ribosomal subunit protein uL6 (177 aa).

The protein belongs to the universal ribosomal protein uL6 family. In terms of assembly, part of the 50S ribosomal subunit.

In terms of biological role, this protein binds to the 23S rRNA, and is important in its secondary structure. It is located near the subunit interface in the base of the L7/L12 stalk, and near the tRNA binding site of the peptidyltransferase center. In Rhizobium leguminosarum bv. trifolii (strain WSM2304), this protein is Large ribosomal subunit protein uL6.